The chain runs to 593 residues: Transmembrane 9 superfamily member 4 (593 aa).

A signal peptide spans Met-1–Ser-25. Residues Asp-26–Trp-230 lie on the Lumenal side of the membrane. Residues Phe-231–Leu-251 form a helical membrane-spanning segment. At Met-252 to Gln-303 the chain is on the cytoplasmic side. Residues Leu-304–Asn-324 form a helical membrane-spanning segment. Over Arg-325–Gly-326 the chain is Lumenal. The chain crosses the membrane as a helical span at residues Ala-327–Ala-347. The Cytoplasmic segment spans residues Ala-348–Thr-366. Residues Gly-367–Ala-387 traverse the membrane as a helical segment. Over Tyr-388 to Thr-398 the chain is Lumenal. The chain crosses the membrane as a helical span at residues Ile-399–Ile-419. The Cytoplasmic segment spans residues Ala-420–Gln-453. The helical transmembrane segment at Met-454–Ala-474 threads the bilayer. Residues Ser-475–Ser-486 lie on the Lumenal side of the membrane. A helical transmembrane segment spans residues Ile-487–Thr-507. Topologically, residues Tyr-508–Ser-522 are cytoplasmic. A helical transmembrane segment spans residues Leu-523–Ala-543. Residues Arg-544 to Ser-554 are Lumenal-facing. Residues Phe-555–Gly-575 traverse the membrane as a helical segment. Over Phe-576 to Glu-593 the chain is Cytoplasmic. The short motif at Phe-582–Tyr-587 is the Endoplasmic reticulum export signal element. Positions Lys-591–Glu-593 match the Golgi retention signal motif.

This sequence belongs to the nonaspanin (TM9SF) (TC 9.A.2) family.

The protein resides in the endosome membrane. Its subcellular location is the golgi apparatus membrane. This chain is Transmembrane 9 superfamily member 4, found in Arabidopsis thaliana (Mouse-ear cress).